Here is a 172-residue protein sequence, read N- to C-terminus: Protein LOL2 (172 aa).

3 putative zinc finger regions span residues 4–34 (QIVCHGCRNILLYPRGAPSVCCAVCHAVSST), 44–74 (HLICGGCRTLLMYTRNATSVRCSCCDTVNLV), and 82–112 (HLNCGQCQTVLMYPYGAPSVKCAICNFITNT).

The protein resides in the nucleus. In terms of biological role, putative zinc finger that may be involved in programmed cell death and defense response. The protein is Protein LOL2 (LOL2) of Oryza sativa subsp. japonica (Rice).